Here is a 249-residue protein sequence, read N- to C-terminus: Probable phosphatase Shal_1519 (249 aa).

9 residues coordinate Zn(2+): H8, H10, H16, H41, E74, H102, H132, D193, and H195.

The protein belongs to the PHP family. Requires Zn(2+) as cofactor.

This chain is Probable phosphatase Shal_1519, found in Shewanella halifaxensis (strain HAW-EB4).